Consider the following 416-residue polypeptide: Formyl-CoA:oxalate CoA-transferase (416 aa).

CoA is bound by residues Gln17–Ser18, Arg38, Leu72–Lys75, Asn96–His98, His104, and Lys137–Glu140. Asp169 acts as the Nucleophile in catalysis. Gly248–Gln250 contributes to the substrate binding site. Gln273–Gln275 is a CoA binding site.

Belongs to the CoA-transferase III family. Frc subfamily. In terms of assembly, homodimer.

The catalysed reaction is formyl-CoA + oxalate = oxalyl-CoA + formate. The protein operates within metabolic intermediate degradation; oxalate degradation; CO(2) and formate from oxalate: step 1/2. Its function is as follows. Involved in the catabolism of oxalate and in the adapatation to low pH via the induction of the oxalate-dependent acid tolerance response (ATR). Catalyzes the transfer of the CoA moiety from formyl-CoA to oxalate. This chain is Formyl-CoA:oxalate CoA-transferase, found in Escherichia coli O81 (strain ED1a).